A 62-amino-acid chain; its full sequence is MGESKSPQESSSEGETKRKFREALDRKMAQSSSGSDHKDGGGKQSRAHGPVASRREFRRKSG.

Over residues 1 to 13 (MGESKSPQESSSE) the composition is skewed to polar residues. Positions 1–62 (MGESKSPQES…SRREFRRKSG (62 aa)) are disordered. The span at 14–28 (GETKRKFREALDRKM) shows a compositional bias: basic and acidic residues.

This is an uncharacterized protein from Mycobacterium tuberculosis (strain ATCC 25618 / H37Rv).